The following is a 264-amino-acid chain: ATP synthase subunit a (264 aa).

The next 5 helical transmembrane spans lie at 39–59 (LDTL…FYII), 97–117 (VAPL…MDLV), 139–159 (TADP…VVFY), 205–225 (LFGN…LPWW), and 239–259 (LLVI…YISL).

Belongs to the ATPase A chain family. As to quaternary structure, F-type ATPases have 2 components, CF(1) - the catalytic core - and CF(0) - the membrane proton channel. CF(1) has five subunits: alpha(3), beta(3), gamma(1), delta(1), epsilon(1). CF(0) has three main subunits: a(1), b(2) and c(9-12). The alpha and beta chains form an alternating ring which encloses part of the gamma chain. CF(1) is attached to CF(0) by a central stalk formed by the gamma and epsilon chains, while a peripheral stalk is formed by the delta and b chains.

The protein resides in the cell inner membrane. Key component of the proton channel; it plays a direct role in the translocation of protons across the membrane. This is ATP synthase subunit a from Coxiella burnetii (strain CbuG_Q212) (Coxiella burnetii (strain Q212)).